We begin with the raw amino-acid sequence, 159 residues long: 3-dehydroquinate dehydratase (159 aa).

Tyrosine 31 acts as the Proton acceptor in catalysis. Substrate is bound by residues asparagine 82, histidine 88, and aspartate 95. The active-site Proton donor is the histidine 109. Substrate is bound by residues 110–111 (IS) and arginine 120.

It belongs to the type-II 3-dehydroquinase family. Homododecamer.

It catalyses the reaction 3-dehydroquinate = 3-dehydroshikimate + H2O. Its pathway is metabolic intermediate biosynthesis; chorismate biosynthesis; chorismate from D-erythrose 4-phosphate and phosphoenolpyruvate: step 3/7. In terms of biological role, catalyzes a trans-dehydration via an enolate intermediate. In Streptomyces avermitilis (strain ATCC 31267 / DSM 46492 / JCM 5070 / NBRC 14893 / NCIMB 12804 / NRRL 8165 / MA-4680), this protein is 3-dehydroquinate dehydratase.